We begin with the raw amino-acid sequence, 41 residues long: uncharacterized protein (41 aa).

Residues 1-12 (MTRNVVRQEFEA) show a composition bias toward basic and acidic residues. Positions 1–23 (MTRNVVRQEFEAPGKPQDSSQQD) are disordered.

This is an uncharacterized protein from Homo sapiens (Human).